The sequence spans 285 residues: Bifunctional protein FolD (285 aa).

NADP(+) is bound by residues 165 to 167 (GAS) and Ile-232.

The protein belongs to the tetrahydrofolate dehydrogenase/cyclohydrolase family. Homodimer.

It carries out the reaction (6R)-5,10-methylene-5,6,7,8-tetrahydrofolate + NADP(+) = (6R)-5,10-methenyltetrahydrofolate + NADPH. The enzyme catalyses (6R)-5,10-methenyltetrahydrofolate + H2O = (6R)-10-formyltetrahydrofolate + H(+). It participates in one-carbon metabolism; tetrahydrofolate interconversion. Functionally, catalyzes the oxidation of 5,10-methylenetetrahydrofolate to 5,10-methenyltetrahydrofolate and then the hydrolysis of 5,10-methenyltetrahydrofolate to 10-formyltetrahydrofolate. The sequence is that of Bifunctional protein FolD from Sulfurihydrogenibium sp. (strain YO3AOP1).